A 136-amino-acid polypeptide reads, in one-letter code: ATP synthase epsilon chain (136 aa).

This sequence belongs to the ATPase epsilon chain family. As to quaternary structure, F-type ATPases have 2 components, CF(1) - the catalytic core - and CF(0) - the membrane proton channel. CF(1) has five subunits: alpha(3), beta(3), gamma(1), delta(1), epsilon(1). CF(0) has three main subunits: a, b and c.

The protein localises to the cellular thylakoid membrane. In terms of biological role, produces ATP from ADP in the presence of a proton gradient across the membrane. This chain is ATP synthase epsilon chain (atpC), found in Prochloron didemni.